Here is a 96-residue protein sequence, read N- to C-terminus: MKATILLAVLVAVFVAGTEAHSHACTSYWCGKFCGTASCTHYLCRVLHPGKMCACVHCSRVNNPFRVNQVAKSINDLDYTPIMKSMENLDNGMDML.

Residues Met1 to Ala20 form the signal peptide. A propeptide spans Val61–Leu96 (removed in mature form).

In terms of processing, contains four disulfide bonds. In terms of tissue distribution, hemocytes.

Its subcellular location is the secreted. In terms of biological role, bacteriolytic activity against Gram-positive bacteria M.luteus, B.megaterium and A.viridans. The sequence is that of Myticin-A from Mytilus galloprovincialis (Mediterranean mussel).